The following is a 382-amino-acid chain: Mannitol-1-phosphate 5-dehydrogenase (382 aa).

3 to 14 serves as a coordination point for NAD(+); sequence AVHFGAGNIGRG.

The protein belongs to the mannitol dehydrogenase family.

The enzyme catalyses D-mannitol 1-phosphate + NAD(+) = beta-D-fructose 6-phosphate + NADH + H(+). The sequence is that of Mannitol-1-phosphate 5-dehydrogenase from Aliivibrio salmonicida (strain LFI1238) (Vibrio salmonicida (strain LFI1238)).